We begin with the raw amino-acid sequence, 306 residues long: Lipoyl synthase (306 aa).

Cys55, Cys60, Cys66, Cys81, Cys85, Cys88, and Ser294 together coordinate [4Fe-4S] cluster. The Radical SAM core domain occupies 67 to 283 (WNHRTATFLL…RAYALARGFR (217 aa)).

The protein belongs to the radical SAM superfamily. Lipoyl synthase family. It depends on [4Fe-4S] cluster as a cofactor.

It localises to the cytoplasm. The catalysed reaction is [[Fe-S] cluster scaffold protein carrying a second [4Fe-4S](2+) cluster] + N(6)-octanoyl-L-lysyl-[protein] + 2 oxidized [2Fe-2S]-[ferredoxin] + 2 S-adenosyl-L-methionine + 4 H(+) = [[Fe-S] cluster scaffold protein] + N(6)-[(R)-dihydrolipoyl]-L-lysyl-[protein] + 4 Fe(3+) + 2 hydrogen sulfide + 2 5'-deoxyadenosine + 2 L-methionine + 2 reduced [2Fe-2S]-[ferredoxin]. The protein operates within protein modification; protein lipoylation via endogenous pathway; protein N(6)-(lipoyl)lysine from octanoyl-[acyl-carrier-protein]: step 2/2. Catalyzes the radical-mediated insertion of two sulfur atoms into the C-6 and C-8 positions of the octanoyl moiety bound to the lipoyl domains of lipoate-dependent enzymes, thereby converting the octanoylated domains into lipoylated derivatives. This Chloroflexus aggregans (strain MD-66 / DSM 9485) protein is Lipoyl synthase.